Here is a 161-residue protein sequence, read N- to C-terminus: Anthranilate 1,2-dioxygenase small subunit (161 aa).

This sequence belongs to the bacterial ring-hydroxylating dioxygenase beta subunit family. In terms of assembly, part of a multicomponent enzyme system composed of a reductase (AndAa), a ferredoxin (AndAb) and a two-subunit oxygenase component (AndAc and AndAd).

It catalyses the reaction anthranilate + NADH + O2 + 3 H(+) = catechol + NH4(+) + CO2 + NAD(+). It carries out the reaction anthranilate + NADPH + O2 + 3 H(+) = catechol + NH4(+) + CO2 + NADP(+). It participates in aromatic compound metabolism; anthranilate degradation via hydroxylation; catechol from anthranilate: step 1/1. Oxygenase component of anthranilate dioxygenase multicomponent enzyme system which catalyzes the incorporation of both atoms of molecular oxygen into anthranilate to form catechol. Can also act on benzoate and salicylate but not on 2-chlorobenzoate or o-toluate. The polypeptide is Anthranilate 1,2-dioxygenase small subunit (Burkholderia cepacia (Pseudomonas cepacia)).